Here is a 143-residue protein sequence, read N- to C-terminus: Large-conductance mechanosensitive channel (143 aa).

3 helical membrane-spanning segments follow: residues 10–30 (FAVK…GAFG), 40–60 (VIMP…LFLV), and 86–106 (GSFI…FMMV).

It belongs to the MscL family. In terms of assembly, homopentamer.

Its subcellular location is the cell inner membrane. Functionally, channel that opens in response to stretch forces in the membrane lipid bilayer. May participate in the regulation of osmotic pressure changes within the cell. The polypeptide is Large-conductance mechanosensitive channel (Paracidovorax citrulli (strain AAC00-1) (Acidovorax citrulli)).